A 276-amino-acid chain; its full sequence is MEKVYGLIGFPVEHSLSPLMHNDAFARLGIPARYHLFSVEPGQVGAAIAGVRALGIAGVNVTIPHKLAVIPFLDEVDEHARRIGAVNTIINNDGRLVGYNTDGLGYVQALEEEMNITLDGKRILVIGAGGGARGIYFSLLSTAAERIDMANRTVEKAERLVREGDERRSAYFSLAEAETRLAEYDIIINTTSVGMHPRVEVQPLSLERLRPGVIVSDIIYNPLETKWLKEAKARGARVQNGVGMLVYQGALAFEKWTGQWPDVNRMKQLVIEALRR.

Shikimate contacts are provided by residues 15–17 and threonine 62; that span reads SLS. Lysine 66 (proton acceptor) is an active-site residue. Residue glutamate 78 participates in NADP(+) binding. Shikimate-binding residues include asparagine 87 and aspartate 102. NADP(+) contacts are provided by residues 151-156 and isoleucine 218; that span reads NRTVEK. Tyrosine 220 serves as a coordination point for shikimate. Residue glycine 241 participates in NADP(+) binding.

It belongs to the shikimate dehydrogenase family. As to quaternary structure, homodimer.

The catalysed reaction is shikimate + NADP(+) = 3-dehydroshikimate + NADPH + H(+). Its pathway is metabolic intermediate biosynthesis; chorismate biosynthesis; chorismate from D-erythrose 4-phosphate and phosphoenolpyruvate: step 4/7. Involved in the biosynthesis of the chorismate, which leads to the biosynthesis of aromatic amino acids. Catalyzes the reversible NADPH linked reduction of 3-dehydroshikimate (DHSA) to yield shikimate (SA). The sequence is that of Shikimate dehydrogenase (NADP(+)) from Geobacillus kaustophilus (strain HTA426).